Consider the following 216-residue polypeptide: Probable transaldolase (216 aa).

Lysine 83 functions as the Schiff-base intermediate with substrate in the catalytic mechanism.

This sequence belongs to the transaldolase family. Type 3B subfamily.

It localises to the cytoplasm. It carries out the reaction D-sedoheptulose 7-phosphate + D-glyceraldehyde 3-phosphate = D-erythrose 4-phosphate + beta-D-fructose 6-phosphate. Its pathway is carbohydrate degradation; pentose phosphate pathway; D-glyceraldehyde 3-phosphate and beta-D-fructose 6-phosphate from D-ribose 5-phosphate and D-xylulose 5-phosphate (non-oxidative stage): step 2/3. Its function is as follows. Transaldolase is important for the balance of metabolites in the pentose-phosphate pathway. In Sorangium cellulosum (strain So ce56) (Polyangium cellulosum (strain So ce56)), this protein is Probable transaldolase.